The following is a 583-amino-acid chain: Lipoprotein LpqB (583 aa).

An N-terminal signal peptide occupies residues 1–29 (MSNKTTEATKTTKVKKVLSVVAGLGLLAG). Cys30 carries N-palmitoyl cysteine lipidation. A lipid anchor (S-diacylglycerol cysteine) is attached at Cys30. Residues 38-63 (NPEAISSYAPAPSGQEAPTPTDGQPS) are disordered.

Belongs to the LpqB lipoprotein family.

Its subcellular location is the cell membrane. The sequence is that of Lipoprotein LpqB from Corynebacterium jeikeium (strain K411).